The chain runs to 132 residues: Protein NrdI (132 aa).

Belongs to the NrdI family.

Probably involved in ribonucleotide reductase function. The chain is Protein NrdI from Staphylococcus epidermidis (strain ATCC 35984 / DSM 28319 / BCRC 17069 / CCUG 31568 / BM 3577 / RP62A).